We begin with the raw amino-acid sequence, 325 residues long: Beta-ketoacyl-[acyl-carrier-protein] synthase III 2 (325 aa).

Catalysis depends on residues cysteine 113 and histidine 250. The ACP-binding stretch occupies residues 251–255 (SANLR). Asparagine 280 is an active-site residue.

This sequence belongs to the thiolase-like superfamily. FabH family. In terms of assembly, homodimer.

It localises to the cytoplasm. The catalysed reaction is 3-methylbutanoyl-CoA + malonyl-[ACP] + H(+) = 5-methyl-3-oxohexanoyl-[ACP] + CO2 + CoA. It catalyses the reaction 2-methylpropanoyl-CoA + malonyl-[ACP] + H(+) = 4-methyl-3-oxopentanoyl-[ACP] + CO2 + CoA. The enzyme catalyses (2S)-2-methylbutanoyl-CoA + malonyl-[ACP] + H(+) = (4S)-4-methyl-3-oxohexanoyl-[ACP] + CO2 + CoA. It carries out the reaction malonyl-[ACP] + acetyl-CoA + H(+) = 3-oxobutanoyl-[ACP] + CO2 + CoA. The catalysed reaction is malonyl-[ACP] + propanoyl-CoA + H(+) = 3-oxopentanoyl-[ACP] + CO2 + CoA. It catalyses the reaction butanoyl-CoA + malonyl-[ACP] + H(+) = 3-oxohexanoyl-[ACP] + CO2 + CoA. The enzyme catalyses pentanoyl-CoA + malonyl-[ACP] + H(+) = 3-oxoheptanoyl-[ACP] + CO2 + CoA. It carries out the reaction hexanoyl-CoA + malonyl-[ACP] + H(+) = 3-oxooctanoyl-[ACP] + CO2 + CoA. The catalysed reaction is heptanoyl-CoA + malonyl-[ACP] + H(+) = 3-oxononanoyl-[ACP] + CO2 + CoA. It functions in the pathway lipid metabolism; fatty acid biosynthesis. Catalyzes the condensation reaction of fatty acid synthesis by the addition to an acyl acceptor of two carbons from malonyl-ACP. Catalyzes the first condensation reaction which initiates fatty acid synthesis and may therefore play a role in governing the total rate of fatty acid production. Possesses both acetoacetyl-ACP synthase and acetyl transacylase activities. Has some substrate specificity for branched chain acyl-CoA, determining the biosynthesis of branched-chain of fatty acids instead of straight-chain. In Bacillus subtilis (strain 168), this protein is Beta-ketoacyl-[acyl-carrier-protein] synthase III 2.